The sequence spans 423 residues: Nucleoporin NUP42 (423 aa).

The C3H1-type zinc-finger motif lies at Met1 to Ala25. Residues Phe14–Gly15 form an FG 1 repeat. The disordered stretch occupies residues Gly24–Ser85. The segment covering Ser40–Trp69 has biased composition (polar residues). The segment at Gly94–Asn170 is interaction with HIV-1 Vpr. Residues Phe95 to Gly96 form an FG 2 repeat. Position 106 is a phosphoserine (Ser106). FG repeat units follow at residues Phe218–Gly219, Phe220–Gly221, Phe265–Gly266, Phe271–Gly272, Phe288–Gly289, Phe290–Gly291, Phe311–Gly312, Phe336–Gly337, Phe345–Gly346, and Phe364–Gly365. The interval Gly365–Val423 is interaction with GLE1.

Probable component of the nuclear pore complex (NPC). Interacts with nuclear export protein NXF1. Interacts with GLE1. Able to form a heterotrimer with NUP155 and GLE1 in vitro. Interacts with XPO1. As to quaternary structure, (Microbial infection) Interacts with the HIV-1 virus proteins Rev and Vpr. The interaction with HIV-1 Rev, a protein that mediates nuclear export of unspliced viral RNAs, suggests that its function may be bypassed by the HIV-1 virus. O-glycosylated. In terms of tissue distribution, ubiquitously expressed.

Its subcellular location is the nucleus. The protein resides in the nuclear pore complex. It localises to the nucleus membrane. In terms of biological role, required for the export of mRNAs containing poly(A) tails from the nucleus into the cytoplasm. (Microbial infection) In case of infection by HIV-1, it may participate in the docking of viral Vpr at the nuclear envelope. The chain is Nucleoporin NUP42 from Homo sapiens (Human).